The following is a 429-amino-acid chain: Glutamate-1-semialdehyde 2,1-aminomutase 1 (429 aa).

Lys-267 is modified (N6-(pyridoxal phosphate)lysine).

This sequence belongs to the class-III pyridoxal-phosphate-dependent aminotransferase family. HemL subfamily. Homodimer. Pyridoxal 5'-phosphate serves as cofactor.

The protein localises to the cytoplasm. It catalyses the reaction (S)-4-amino-5-oxopentanoate = 5-aminolevulinate. It functions in the pathway porphyrin-containing compound metabolism; protoporphyrin-IX biosynthesis; 5-aminolevulinate from L-glutamyl-tRNA(Glu): step 2/2. This chain is Glutamate-1-semialdehyde 2,1-aminomutase 1, found in Bacillus velezensis (strain DSM 23117 / BGSC 10A6 / LMG 26770 / FZB42) (Bacillus amyloliquefaciens subsp. plantarum).